Consider the following 497-residue polypeptide: Glycogen synthase (497 aa).

Lys15 is a binding site for ADP-alpha-D-glucose.

This sequence belongs to the glycosyltransferase 1 family. Bacterial/plant glycogen synthase subfamily.

The enzyme catalyses [(1-&gt;4)-alpha-D-glucosyl](n) + ADP-alpha-D-glucose = [(1-&gt;4)-alpha-D-glucosyl](n+1) + ADP + H(+). It participates in glycan biosynthesis; glycogen biosynthesis. Functionally, synthesizes alpha-1,4-glucan chains using ADP-glucose. This is Glycogen synthase from Thermodesulfovibrio yellowstonii (strain ATCC 51303 / DSM 11347 / YP87).